The following is a 507-amino-acid chain: Maturase K (507 aa).

This sequence belongs to the intron maturase 2 family. MatK subfamily.

It localises to the plastid. The protein resides in the chloroplast. In terms of biological role, usually encoded in the trnK tRNA gene intron. Probably assists in splicing its own and other chloroplast group II introns. The sequence is that of Maturase K from Ranunculus acris (Meadow buttercup).